Consider the following 301-residue polypeptide: Pantothenate synthetase (301 aa).

30–37 is an ATP binding site; the sequence is MGNLHEGH. The active-site Proton donor is His37. Gln61 contacts (R)-pantoate. Gln61 contributes to the beta-alanine binding site. 149-152 lines the ATP pocket; the sequence is GEKD. A (R)-pantoate-binding site is contributed by Gln155. Residues Val178 and 186–189 each bind ATP; that span reads MSSR.

The protein belongs to the pantothenate synthetase family. In terms of assembly, homodimer.

The protein resides in the cytoplasm. The enzyme catalyses (R)-pantoate + beta-alanine + ATP = (R)-pantothenate + AMP + diphosphate + H(+). It functions in the pathway cofactor biosynthesis; (R)-pantothenate biosynthesis; (R)-pantothenate from (R)-pantoate and beta-alanine: step 1/1. Catalyzes the condensation of pantoate with beta-alanine in an ATP-dependent reaction via a pantoyl-adenylate intermediate. In Vibrio vulnificus (strain YJ016), this protein is Pantothenate synthetase.